Reading from the N-terminus, the 293-residue chain is N-acetylneuraminate lyase (293 aa).

Residues Ser-47 and Thr-48 each contribute to the aceneuramate site. Tyr-136 (proton donor) is an active-site residue. The active-site Schiff-base intermediate with substrate is Lys-164. Positions 166, 188, 190, 191, and 207 each coordinate aceneuramate.

It belongs to the DapA family. NanA subfamily. Homotetramer.

Its subcellular location is the cytoplasm. It catalyses the reaction aceneuramate = aldehydo-N-acetyl-D-mannosamine + pyruvate. Its pathway is amino-sugar metabolism; N-acetylneuraminate degradation; D-fructose 6-phosphate from N-acetylneuraminate: step 1/5. In terms of biological role, catalyzes the reversible aldol cleavage of N-acetylneuraminic acid (sialic acid; Neu5Ac) to form pyruvate and N-acetylmannosamine (ManNAc) via a Schiff base intermediate. This Haemophilus influenzae (strain ATCC 51907 / DSM 11121 / KW20 / Rd) protein is N-acetylneuraminate lyase.